The chain runs to 947 residues: Altered inheritance of mitochondria protein 3 (947 aa).

Disordered stretches follow at residues 1-334, 354-810, and 824-904; these read MGFW…LLPQ, MSST…QDEV, and RKTN…KSLE. The span at 36-54 shows a compositional bias: basic residues; sequence ASKKHYNNSKARRERKSGK. A phosphoserine mark is found at Ser-57, Ser-58, and Ser-64. The span at 59-69 shows a compositional bias: acidic residues; it reads DEEYDSEDEME. The segment covering 70–84 has biased composition (basic and acidic residues); it reads YERKPTDIRSLKDPK. Low complexity-rich tracts occupy residues 93-105 and 130-163; these read PGQKTYTGQQQQQ and QSQYAQPQYNQYPQQQLQQGVMPQQQQLQQGVVP. Residues 177 to 255 are compositionally biased toward polar residues; it reads GSNSNATSYQ…YVSHGSTNLG (79 aa). Composition is skewed to low complexity over residues 256–289 and 313–334; these read QSQFPSGQQQQPTTQFGQQVLPSPAQPQQQQQGQ and QQQQQQQQQQQPLNQNNALLPQ. Residues 354 to 367 are compositionally biased toward polar residues; that stretch reads MSSTTNMQDSNPSY. Over residues 379–395 the composition is skewed to pro residues; sequence GGQPPVPVRMQPQPPQP. Residues 466 to 475 show a composition bias toward polar residues; that stretch reads IQPNTTSSAA. Ser-476 is subject to Phosphoserine. The segment covering 488-502 has biased composition (basic and acidic residues); the sequence is DNERNSGNKENDEST. Polar residues predominate over residues 633-644; that stretch reads VPQSKPQSQSQF. Positions 667-676 are enriched in low complexity; that stretch reads SQSSNSSDSS. Thr-729 is subject to Phosphothreonine. Basic and acidic residues predominate over residues 749–759; that stretch reads DSSKDANKYEK. Over residues 763–774 the composition is skewed to polar residues; that stretch reads PVTSSIQAQQST. The residue at position 861 (Thr-861) is a Phosphothreonine. Positions 862–879 are enriched in pro residues; it reads PPRPPPSRSSPKKVPPVV. Positions 888 to 899 are enriched in basic residues; the sequence is KKPPVVPKKKPL.

Belongs to the AIM3 family. Interacts with RVS167.

It is found in the membrane raft. The chain is Altered inheritance of mitochondria protein 3 (AIM3) from Saccharomyces cerevisiae (strain ATCC 204508 / S288c) (Baker's yeast).